A 305-amino-acid polypeptide reads, in one-letter code: tRNA-cytidine(32) 2-sulfurtransferase (305 aa).

Residues Met-1–Arg-20 form a disordered region. The short motif at Ser-59–Ser-64 is the PP-loop motif element. Residues Cys-134, Cys-137, and Cys-225 each contribute to the [4Fe-4S] cluster site. Positions Asp-282–Ala-293 are enriched in low complexity. The disordered stretch occupies residues Asp-282–Asp-305.

It belongs to the TtcA family. As to quaternary structure, homodimer. Requires Mg(2+) as cofactor. [4Fe-4S] cluster serves as cofactor.

The protein localises to the cytoplasm. It carries out the reaction cytidine(32) in tRNA + S-sulfanyl-L-cysteinyl-[cysteine desulfurase] + AH2 + ATP = 2-thiocytidine(32) in tRNA + L-cysteinyl-[cysteine desulfurase] + A + AMP + diphosphate + H(+). It participates in tRNA modification. Catalyzes the ATP-dependent 2-thiolation of cytidine in position 32 of tRNA, to form 2-thiocytidine (s(2)C32). The sulfur atoms are provided by the cysteine/cysteine desulfurase (IscS) system. This chain is tRNA-cytidine(32) 2-sulfurtransferase, found in Xanthomonas euvesicatoria pv. vesicatoria (strain 85-10) (Xanthomonas campestris pv. vesicatoria).